The chain runs to 153 residues: UPF0251 protein CT0950 (153 aa).

The protein belongs to the UPF0251 family.

This Chlorobaculum tepidum (strain ATCC 49652 / DSM 12025 / NBRC 103806 / TLS) (Chlorobium tepidum) protein is UPF0251 protein CT0950.